Reading from the N-terminus, the 557-residue chain is Estrogen receptor beta (557 aa).

The interval 1–154 is modulating; that stretch reads MMAAASSPEK…SSGGKADLHY (154 aa). 2 consecutive NR C4-type zinc fingers follow at residues 155–175 and 191–215; these read CAVC…CEGC and CPAT…LRKC. The nuclear receptor DNA-binding region spans 155–220; sequence CAVCHDYASG…RLRKCYEVGM (66 aa). The segment at 240-268 is disordered; it reads LTRLSSQGKTAEPKGITGPAEGSLNKPEK. The region spanning 272–508 is the NR LBD domain; it reads TPEQLIERIL…DLLLEMLDAH (237 aa). A disordered region spans residues 513–557; sequence SCLPHQPPQQDSKDQSEVPAPLHSSAGGPSNTWTPSSARAGGESQ. The span at 539–557 shows a compositional bias: polar residues; that stretch reads GGPSNTWTPSSARAGGESQ.

Belongs to the nuclear hormone receptor family. NR3 subfamily. Binds DNA as a homodimer. Can form a heterodimer with ER-alpha.

The protein localises to the nucleus. Functionally, binds estrogens with an affinity similar to that of ER-alpha, and activates expression of reporter genes containing estrogen response elements (ERE) in an estrogen-dependent manner. The protein is Estrogen receptor beta (esr2) of Oreochromis niloticus (Nile tilapia).